Consider the following 205-residue polypeptide: Protein N-terminal glutamine amidohydrolase (205 aa).

Residues Cys-20, His-74, and Asp-90 contribute to the active site.

Belongs to the NTAQ1 family. Monomer.

The catalysed reaction is N-terminal L-glutaminyl-[protein] + H2O = N-terminal L-glutamyl-[protein] + NH4(+). Functionally, mediates the side-chain deamidation of N-terminal glutamine residues to glutamate, an important step in N-end rule pathway of protein degradation. Conversion of the resulting N-terminal glutamine to glutamate renders the protein susceptible to arginylation, polyubiquitination and degradation as specified by the N-end rule. Does not act on substrates with internal or C-terminal glutamine and does not act on non-glutamine residues in any position. The polypeptide is Protein N-terminal glutamine amidohydrolase (tun) (Drosophila melanogaster (Fruit fly)).